Consider the following 359-residue polypeptide: GDSL esterase/lipase At5g03610 (359 aa).

The N-terminal stretch at 1-22 (MDSLIKLFFCLFIFLCTSLLFG) is a signal peptide. The active-site Nucleophile is the Ser50. N-linked (GlcNAc...) asparagine glycans are attached at residues Asn136, Asn236, and Asn259. Active-site residues include Asp332 and His335.

The protein belongs to the 'GDSL' lipolytic enzyme family.

The protein resides in the secreted. This Arabidopsis thaliana (Mouse-ear cress) protein is GDSL esterase/lipase At5g03610.